Reading from the N-terminus, the 318-residue chain is 4-hydroxy-3-methylbut-2-enyl diphosphate reductase (318 aa).

Position 12 (cysteine 12) interacts with [4Fe-4S] cluster. (2E)-4-hydroxy-3-methylbut-2-enyl diphosphate is bound by residues histidine 41 and histidine 74. Residues histidine 41 and histidine 74 each coordinate dimethylallyl diphosphate. Isopentenyl diphosphate is bound by residues histidine 41 and histidine 74. Residue cysteine 96 participates in [4Fe-4S] cluster binding. Histidine 124 is a (2E)-4-hydroxy-3-methylbut-2-enyl diphosphate binding site. A dimethylallyl diphosphate-binding site is contributed by histidine 124. Residue histidine 124 participates in isopentenyl diphosphate binding. Glutamate 126 serves as the catalytic Proton donor. Threonine 168 contacts (2E)-4-hydroxy-3-methylbut-2-enyl diphosphate. Cysteine 198 serves as a coordination point for [4Fe-4S] cluster. Serine 226, serine 227, asparagine 228, and serine 270 together coordinate (2E)-4-hydroxy-3-methylbut-2-enyl diphosphate. Dimethylallyl diphosphate-binding residues include serine 226, serine 227, asparagine 228, and serine 270. Isopentenyl diphosphate-binding residues include serine 226, serine 227, asparagine 228, and serine 270.

It belongs to the IspH family. It depends on [4Fe-4S] cluster as a cofactor.

The catalysed reaction is isopentenyl diphosphate + 2 oxidized [2Fe-2S]-[ferredoxin] + H2O = (2E)-4-hydroxy-3-methylbut-2-enyl diphosphate + 2 reduced [2Fe-2S]-[ferredoxin] + 2 H(+). It carries out the reaction dimethylallyl diphosphate + 2 oxidized [2Fe-2S]-[ferredoxin] + H2O = (2E)-4-hydroxy-3-methylbut-2-enyl diphosphate + 2 reduced [2Fe-2S]-[ferredoxin] + 2 H(+). Its pathway is isoprenoid biosynthesis; dimethylallyl diphosphate biosynthesis; dimethylallyl diphosphate from (2E)-4-hydroxy-3-methylbutenyl diphosphate: step 1/1. It participates in isoprenoid biosynthesis; isopentenyl diphosphate biosynthesis via DXP pathway; isopentenyl diphosphate from 1-deoxy-D-xylulose 5-phosphate: step 6/6. In terms of biological role, catalyzes the conversion of 1-hydroxy-2-methyl-2-(E)-butenyl 4-diphosphate (HMBPP) into a mixture of isopentenyl diphosphate (IPP) and dimethylallyl diphosphate (DMAPP). Acts in the terminal step of the DOXP/MEP pathway for isoprenoid precursor biosynthesis. The chain is 4-hydroxy-3-methylbut-2-enyl diphosphate reductase from Psychrobacter arcticus (strain DSM 17307 / VKM B-2377 / 273-4).